The following is a 337-amino-acid chain: 1-aminocyclopropane-1-carboxylate deaminase (337 aa).

K50 bears the N6-(pyridoxal phosphate)lysine mark. S77 functions as the Nucleophile in the catalytic mechanism.

This sequence belongs to the ACC deaminase/D-cysteine desulfhydrase family. Homotrimer. Requires pyridoxal 5'-phosphate as cofactor.

It carries out the reaction 1-aminocyclopropane-1-carboxylate + H2O = 2-oxobutanoate + NH4(+). Functionally, catalyzes a cyclopropane ring-opening reaction, the irreversible conversion of 1-aminocyclopropane-1-carboxylate (ACC) to ammonia and alpha-ketobutyrate. Allows growth on ACC as a nitrogen source. This Allorhizobium ampelinum (strain ATCC BAA-846 / DSM 112012 / S4) (Agrobacterium vitis (strain S4)) protein is 1-aminocyclopropane-1-carboxylate deaminase.